The chain runs to 711 residues: F-box only protein 34 (711 aa).

Disordered stretches follow at residues 1 to 36 (MHLK…VNDE), 249 to 271 (SESY…EVGE), 337 to 372 (DTQV…ASQD), and 494 to 529 (YSQL…GSAE). Residues 10-23 (QKKEHPPEVSRETQ) are compositionally biased toward basic and acidic residues. Residues 354–364 (RADRCSPKEDQ) show a composition bias toward basic and acidic residues. The F-box domain occupies 572 to 624 (QQYMAFLPHHIMVKIFRLLPTKSLVALKCTCCYFKFIIEYYNIRPADSRWVRD).

Directly interacts with SKP1 and CUL1.

In terms of biological role, substrate-recognition component of the SCF (SKP1-CUL1-F-box protein)-type E3 ubiquitin ligase complex. The sequence is that of F-box only protein 34 (FBXO34) from Homo sapiens (Human).